The chain runs to 564 residues: CTP synthase (564 aa).

The amidoligase domain stretch occupies residues 1-265; it reads MTKFVFVTGG…DEIVCHRLGI (265 aa). Ser13 provides a ligand contact to CTP. UTP is bound at residue Ser13. Residues 14–19 and Asp71 each bind ATP; that span reads SLGKGI. Asp71 and Glu139 together coordinate Mg(2+). Residues 146-148, 186-191, and Lys222 contribute to the CTP site; these read DIE and KTKPTQ. Residues 186–191 and Lys222 each bind UTP; that span reads KTKPTQ. In terms of domain architecture, Glutamine amidotransferase type-1 spans 290-543; that stretch reads SIALVGKYVD…VRAAISFADK (254 aa). L-glutamine is bound at residue Gly351. Cys378 functions as the Nucleophile; for glutamine hydrolysis in the catalytic mechanism. Residues 379–382, Glu402, and Arg469 contribute to the L-glutamine site; that span reads LGMQ. Active-site residues include His516 and Glu518.

The protein belongs to the CTP synthase family. In terms of assembly, homotetramer.

The catalysed reaction is UTP + L-glutamine + ATP + H2O = CTP + L-glutamate + ADP + phosphate + 2 H(+). It catalyses the reaction L-glutamine + H2O = L-glutamate + NH4(+). The enzyme catalyses UTP + NH4(+) + ATP = CTP + ADP + phosphate + 2 H(+). It functions in the pathway pyrimidine metabolism; CTP biosynthesis via de novo pathway; CTP from UDP: step 2/2. With respect to regulation, allosterically activated by GTP, when glutamine is the substrate; GTP has no effect on the reaction when ammonia is the substrate. The allosteric effector GTP functions by stabilizing the protein conformation that binds the tetrahedral intermediate(s) formed during glutamine hydrolysis. Inhibited by the product CTP, via allosteric rather than competitive inhibition. In terms of biological role, catalyzes the ATP-dependent amination of UTP to CTP with either L-glutamine or ammonia as the source of nitrogen. Regulates intracellular CTP levels through interactions with the four ribonucleotide triphosphates. This is CTP synthase from Nitrosomonas eutropha (strain DSM 101675 / C91 / Nm57).